A 930-amino-acid polypeptide reads, in one-letter code: Isoleucine--tRNA ligase (930 aa).

Residues 57 to 67 (PYANGNIHVGH) carry the 'HIGH' region motif. Glu554 is an L-isoleucyl-5'-AMP binding site. A 'KMSKS' region motif is present at residues 595–599 (KMSKS). Lys598 contributes to the ATP binding site.

The protein belongs to the class-I aminoacyl-tRNA synthetase family. IleS type 1 subfamily. In terms of assembly, monomer.

Its subcellular location is the cytoplasm. It carries out the reaction tRNA(Ile) + L-isoleucine + ATP = L-isoleucyl-tRNA(Ile) + AMP + diphosphate. In terms of biological role, catalyzes the attachment of isoleucine to tRNA(Ile). As IleRS can inadvertently accommodate and process structurally similar amino acids such as valine, to avoid such errors it has two additional distinct tRNA(Ile)-dependent editing activities. One activity is designated as 'pretransfer' editing and involves the hydrolysis of activated Val-AMP. The other activity is designated 'posttransfer' editing and involves deacylation of mischarged Val-tRNA(Ile). The protein is Isoleucine--tRNA ligase of Streptococcus agalactiae serotype Ia (strain ATCC 27591 / A909 / CDC SS700).